The sequence spans 396 residues: MNNMAGNTPEVVDWFARARRLQKQQLHQLAQQGTLAGQISALVHMLQCERGASNIWLCSGGRLYAAECRAGAALVDEQLTRFYAALEPARDAASSALCWRIACAVWYLPQLAALRKRVRDREIAAEEATGQFSRIIRHLLNIVPQLNDSIDDPQIAGRMVALYSFMQGKELAGQERALGALGFARGQFSDELRQQLVDRIDGQQPCFDSFQALAQPPQTALFAEQCQASLEIEQLRRVACTRQPPADEGETALRWFCAQTQRLEQLRGVEELLIVDLLNAADALLEGEEPEAQLPPADWQEDSIALRLDKQLLPLVRQQAHELQQLSGQLASLKDALEERKLIEKAKSVLMTYQGMQEEQAWQALRKMAMDKNQRMVEIARALLTVKALWRVTPKE.

The 248-residue stretch at 37-284 (GQISALVHML…VDLLNAADAL (248 aa)) folds into the NIT domain. The ANTAR domain occupies 323 to 384 (LQQLSGQLAS…RMVEIARALL (62 aa)).

Nitrate- and nitrite-responsive positive regulator for nasFEDCBA operon expression. NasR protein binds to the factor-independent terminator site located in the nasF operon leader RNA to effect transcription antitermination. In Klebsiella oxytoca, this protein is Nitrate regulatory protein (nasR).